Consider the following 673-residue polypeptide: Protein-arginine deiminase type-2 (673 aa).

Met1 carries the post-translational modification N-acetylmethionine. The Ca(2+) site is built by Asp131, Asp133, Asp135, Glu139, Asn162, Asp164, Asp166, Asp174, Asp177, Lys179, Asp185, and Asp188. Arg352 is subject to Citrulline. 5 residues coordinate Ca(2+): Glu362, Asp397, Phe416, Leu419, and Glu420. The Nucleophile role is filled by Cys655.

This sequence belongs to the protein arginine deiminase family. Homodimer. Requires Ca(2+) as cofactor. In terms of tissue distribution, expressed in various tissues including muscle, uterus, spinal cord, salivary gland and pancreas.

It is found in the cytoplasm. The enzyme catalyses L-arginyl-[protein] + H2O = L-citrullyl-[protein] + NH4(+). Catalyzes the deimination of arginine residues of proteins. The chain is Protein-arginine deiminase type-2 (Padi2) from Mus musculus (Mouse).